The sequence spans 741 residues: Type VI secretion system spike protein VgrG1b (741 aa).

2 stretches are compositionally biased toward polar residues: residues 614-629 (SIGANRSESVGNNETI) and 649-663 (GNQSTSIGKNESRSV). The disordered stretch occupies residues 614-678 (SIGANRSESV…TSVGKDDSLD (65 aa)).

It belongs to the VgrG protein family.

Its subcellular location is the secreted. Functionally, part of the H1 type VI secretion system (H1-T6SS) specialized secretion system, which delivers several virulence factors in both prokaryotic and eukaryotic cells during infection. Allows the delivery of the Tse7 toxin to target cells where it exerts toxicity through its nuclease domain. The protein is Type VI secretion system spike protein VgrG1b of Pseudomonas aeruginosa (strain ATCC 15692 / DSM 22644 / CIP 104116 / JCM 14847 / LMG 12228 / 1C / PRS 101 / PAO1).